Here is a 935-residue protein sequence, read N- to C-terminus: Progesterone receptor (935 aa).

The disordered stretch occupies residues 1 to 50; that stretch reads MTELKAKGPRAPHVAGSPSSPKVGSPLPCSQAAGPFPGSQTSDTLPEASA. An AF3; mediates transcriptional activation region spans residues 1–164; sequence MTELKAKGPR…PATQRVLSPL (164 aa). The modulating, Pro-Rich stretch occupies residues 1 to 568; that stretch reads MTELKAKGPR…YSFESLPQKI (568 aa). At serine 20 the chain carries Phosphoserine. The LXXL motif 1 signature appears at 55–59; it reads LDGLL. The segment at 62-159 is disordered; it reads RICQGQDPTD…DPPAAPATQR (98 aa). At serine 81 the chain carries Phosphoserine. Residues 115–119 carry the LXXL motif 2 motif; the sequence is LDTLW. Residues serine 130 and serine 162 each carry the phosphoserine modification. Positions 165–305 are mediates transcriptional transrepression; it reads MSRSGGKAGD…LATTVTDFIH (141 aa). The short motif at 183-187 is the Nuclear localization signal element; that stretch reads KVLPR. A disordered region spans residues 185–252; the sequence is LPRGLSPSRQ…ALGGAAAGGG (68 aa). At serine 190 the chain carries Phosphoserine. Polar residues predominate over residues 191–203; it reads PSRQLLLPTSGSP. Serine 213 carries the phosphoserine modification. A compositionally biased stretch (acidic residues) spans 220 to 231; sequence EVEEEDGSESED. Positions 232–246 are enriched in low complexity; it reads SAGPLLKGKPRALGG. Serine 294 carries the post-translational modification Phosphoserine; by MAPK1. The segment at 331-365 is disordered; sequence GGAGAASAFAPPRSSPSASSTPVPGGDFPDCAYAP. The segment covering 335-356 has biased composition (low complexity); sequence AASAFAPPRSSPSASSTPVPGG. The residue at position 345 (serine 345) is a Phosphoserine; by MAPK. Lysine 388 participates in a covalent cross-link: Glycyl lysine isopeptide (Lys-Gly) (interchain with G-Cter in SUMO); alternate. Lysine 388 participates in a covalent cross-link: Glycyl lysine isopeptide (Lys-Gly) (interchain with G-Cter in ubiquitin); alternate. Serine 400 bears the Phosphoserine; by CDK2 mark. The interval 415–452 is disordered; sequence PDFPLGPPPSLPPRAPPPRPGEAAVTAAPASASVSSAS. Pro residues predominate over residues 418-434; the sequence is PLGPPPSLPPRAPPPRP. A compositionally biased stretch (low complexity) spans 435–452; sequence GEAAVTAAPASASVSSAS. The AF1; mediates transcriptional activation stretch occupies residues 456-548; sequence STLECILYKA…VYPPYLNYLR (93 aa). Lysine 533 participates in a covalent cross-link: Glycyl lysine isopeptide (Lys-Gly) (interchain with G-Cter in SUMO). NR C4-type zinc fingers lie at residues 569–589 and 605–629; these read CLICGDEASGCHYGVLTCGSC and CAGRNDCIVDKIRRKNCPACRLRKC. The segment at residues 569-641 is a DNA-binding region (nuclear receptor); it reads CLICGDEASG…AGMVLGGRKF (73 aa). Residue serine 678 is modified to Phosphoserine. The NR LBD domain maps to 681–915; sequence QDIQLIPPLI…EFPEMMSEVI (235 aa). An AF2; mediates transcriptional activation region spans residues 689-935; sequence LINLLLSIEP…MVKPLLFHKK (247 aa).

This sequence belongs to the nuclear hormone receptor family. As to quaternary structure, interacts with SMARD1 and UNC45A. Interacts with CUEDC2; the interaction promotes ubiquitination, decreases sumoylation, and represses transcriptional activity. Interacts with PIAS3; the interaction promotes sumoylation of PR in a hormone-dependent manner, inhibits DNA-binding, and alters nuclear export. Interacts with SP1; the interaction requires ligand-induced phosphorylation on Ser-344 by ERK1/2-MAPK. Interacts with PRMT2. Interacts with NCOA2 and NCOA1. Interacts with KLF9. Interacts with GTF2B. Phosphorylated on multiple serine sites. Several of these sites are hormone-dependent. Phosphorylation on Ser-294 is highly hormone-dependent and modulates ubiquitination and sumoylation on Lys-388. Phosphorylation on Ser-345 requires induction by hormone. Basal phosphorylation on Ser-81, Ser-162, Ser-190 and Ser-400 is increased in response to progesterone and can be phosphorylated in vitro by the CDK2-A1 complex. Increased levels of phosphorylation on Ser-400 also in the presence of EGF, heregulin, IGF, PMA and FBS. Phosphorylation at this site by CDK2 is ligand-independent, and increases nuclear translocation and transcriptional activity. Phosphorylation at Ser-162 and Ser-294, but not at Ser-190, is impaired during the G(2)/M phase of the cell cycle. Phosphorylation on Ser-345 by ERK1/2 MAPK is required for interaction with SP1. In terms of processing, sumoylation is hormone-dependent and represses transcriptional activity. Sumoylation on all three sites is enhanced by PIAS3. Desumoylated by SENP1. Sumoylation on Lys-388, the main site of sumoylation, is repressed by ubiquitination on the same site, and modulated by phosphorylation at Ser-294. Post-translationally, ubiquitination is hormone-dependent and represses sumoylation on the same site. Promoted by MAPK-mediated phosphorylation on Ser-294. Palmitoylated by ZDHHC7 and ZDHHC21. Palmitoylation is required for plasma membrane targeting and for rapid intracellular signaling via ERK and AKT kinases and cAMP generation.

Its subcellular location is the nucleus. It localises to the cytoplasm. In terms of biological role, the steroid hormones and their receptors are involved in the regulation of eukaryotic gene expression and affect cellular proliferation and differentiation in target tissues. Transcriptional activator of several progesteron-dependent promoters in a variety of cell types. Involved in activation of SRC-dependent MAPK signaling on hormone stimulation. The chain is Progesterone receptor (PGR) from Pithecia irrorata (Gray monk saki).